The primary structure comprises 115 residues: U3-lycotoxin-Ls1h (115 aa).

Residues 1–20 form the signal peptide; the sequence is MKFVLLFGVFLVTLFSYSSA. Positions 21–44 are excised as a propeptide; it reads EMLDDFDQADEDELLSLIEKEEAR. Cystine bridges form between Cys-48-Cys-63, Cys-55-Cys-72, Cys-62-Cys-87, and Cys-74-Cys-85.

The protein belongs to the neurotoxin 19 (CSTX) family. 01 subfamily. Expressed by the venom gland.

The protein localises to the secreted. The sequence is that of U3-lycotoxin-Ls1h from Lycosa singoriensis (Wolf spider).